An 83-amino-acid chain; its full sequence is MSGSTGERSFADIITSIRYWIIHSITIPSLFIAGWLFVSTGLAYDVFGSPRPNEYFTETRQGIPLITGRFDSLEQLDEFSRSF.

The helical transmembrane segment at 21-35 threads the bilayer; it reads IIHSITIPSLFIAGW. Residue His-23 coordinates heme.

Heterodimer of an alpha subunit and a beta subunit. PSII is composed of 1 copy each of membrane proteins PsbA, PsbB, PsbC, PsbD, PsbE, PsbF, PsbH, PsbI, PsbJ, PsbK, PsbL, PsbM, PsbT, PsbX, PsbY, PsbZ, Psb30/Ycf12, at least 3 peripheral proteins of the oxygen-evolving complex and a large number of cofactors. It forms dimeric complexes. Heme b serves as cofactor.

Its subcellular location is the plastid. It localises to the chloroplast thylakoid membrane. In terms of biological role, this b-type cytochrome is tightly associated with the reaction center of photosystem II (PSII). PSII is a light-driven water:plastoquinone oxidoreductase that uses light energy to abstract electrons from H(2)O, generating O(2) and a proton gradient subsequently used for ATP formation. It consists of a core antenna complex that captures photons, and an electron transfer chain that converts photonic excitation into a charge separation. The chain is Cytochrome b559 subunit alpha from Pisum sativum (Garden pea).